The primary structure comprises 439 residues: Uracil-regulated protein 1 (439 aa).

The interval 1–24 is disordered; the sequence is MLATEQSRPAECNGAHAHEKTEEV. 268 to 272 serves as a coordination point for GTP; sequence RVHDE. Positions 273, 284, and 286 each coordinate Zn(2+). Residue 315–317 participates in GTP binding; it reads EGR. The Proton acceptor role is filled by aspartate 353. Arginine 355 acts as the Nucleophile in catalysis. The GTP site is built by serine 377 and lysine 382.

Belongs to the GTP cyclohydrolase II family.

The protein resides in the cytoplasm. Its subcellular location is the nucleus. The sequence is that of Uracil-regulated protein 1 (urg1) from Schizosaccharomyces pombe (strain 972 / ATCC 24843) (Fission yeast).